We begin with the raw amino-acid sequence, 199 residues long: Heparin-binding hemagglutinin (199 aa).

A compositionally biased stretch (low complexity) spans 162–180 (KAAPAKKAAPAKKAAPAKK). The interval 162–199 (KAAPAKKAAPAKKAAPAKKAAAKKAPAKKAAAKKVTQK) is disordered. Residues 181–199 (AAAKKAPAKKAAAKKVTQK) show a composition bias toward basic residues.

It to M.leprae HbhA. In terms of processing, glycosylated. Glycosylation may protect the protein from proteolytic degradation and be important for hemagglutination. It suggests that the carbohydrate moiety may be located within the C-terminal domain of HbhA.

Its subcellular location is the cell surface. Its function is as follows. Required for extrapulmonary dissemination. Mediates adherence to epithelial cells by binding to sulfated glycoconjugates present at the surface of these cells. The chain is Heparin-binding hemagglutinin (hbhA) from Mycobacterium tuberculosis (strain CDC 1551 / Oshkosh).